A 358-amino-acid polypeptide reads, in one-letter code: Phosphoserine aminotransferase (358 aa).

Arg41 is a binding site for L-glutamate. Residues 75 to 76 (AS), Trp100, Thr148, Asp167, and Gln190 contribute to the pyridoxal 5'-phosphate site. Lys191 carries the N6-(pyridoxal phosphate)lysine modification. A pyridoxal 5'-phosphate-binding site is contributed by 233–234 (NT).

The protein belongs to the class-V pyridoxal-phosphate-dependent aminotransferase family. SerC subfamily. In terms of assembly, homodimer. Pyridoxal 5'-phosphate is required as a cofactor.

It localises to the cytoplasm. It catalyses the reaction O-phospho-L-serine + 2-oxoglutarate = 3-phosphooxypyruvate + L-glutamate. The enzyme catalyses 4-(phosphooxy)-L-threonine + 2-oxoglutarate = (R)-3-hydroxy-2-oxo-4-phosphooxybutanoate + L-glutamate. The protein operates within amino-acid biosynthesis; L-serine biosynthesis; L-serine from 3-phospho-D-glycerate: step 2/3. It participates in cofactor biosynthesis; pyridoxine 5'-phosphate biosynthesis; pyridoxine 5'-phosphate from D-erythrose 4-phosphate: step 3/5. In terms of biological role, catalyzes the reversible conversion of 3-phosphohydroxypyruvate to phosphoserine and of 3-hydroxy-2-oxo-4-phosphonooxybutanoate to phosphohydroxythreonine. This Campylobacter jejuni subsp. jejuni serotype O:23/36 (strain 81-176) protein is Phosphoserine aminotransferase.